A 346-amino-acid chain; its full sequence is Ketol-acid reductoisomerase (NADP(+)) (346 aa).

A KARI N-terminal Rossmann domain is found at 1–141; that stretch reads KKNSILKKNQ…GAHHAGVLES (141 aa). NADP(+) contacts are provided by residues Ser-11 and 41-43; that span reads DKQ. His-65 is an active-site residue. Gly-91 provides a ligand contact to NADP(+). KARI C-terminal knotted domains follow at residues 142-286 and 287-346; these read SFVA…PEQE and YYDH…NKVI. Residues Asp-150, Glu-154, Glu-322, and Glu-326 each coordinate Mg(2+).

It belongs to the ketol-acid reductoisomerase family. Mg(2+) is required as a cofactor.

It catalyses the reaction (2R)-2,3-dihydroxy-3-methylbutanoate + NADP(+) = (2S)-2-acetolactate + NADPH + H(+). It carries out the reaction (2R,3R)-2,3-dihydroxy-3-methylpentanoate + NADP(+) = (S)-2-ethyl-2-hydroxy-3-oxobutanoate + NADPH + H(+). The protein operates within amino-acid biosynthesis; L-isoleucine biosynthesis; L-isoleucine from 2-oxobutanoate: step 2/4. It participates in amino-acid biosynthesis; L-valine biosynthesis; L-valine from pyruvate: step 2/4. Involved in the biosynthesis of branched-chain amino acids (BCAA). Catalyzes an alkyl-migration followed by a ketol-acid reduction of (S)-2-acetolactate (S2AL) to yield (R)-2,3-dihydroxy-isovalerate. In the isomerase reaction, S2AL is rearranged via a Mg-dependent methyl migration to produce 3-hydroxy-3-methyl-2-ketobutyrate (HMKB). In the reductase reaction, this 2-ketoacid undergoes a metal-dependent reduction by NADPH to yield (R)-2,3-dihydroxy-isovalerate. The chain is Ketol-acid reductoisomerase (NADP(+)) (ilvC) from Buchnera aphidicola subsp. Uroleucon rurale.